The sequence spans 44 residues: uncharacterized protein (44 aa).

Positions 22–44 are disordered; it reads LNSAPAFKSSQNTSTQAKPTFSN.

This is an uncharacterized protein from Dictyostelium discoideum (Social amoeba).